Reading from the N-terminus, the 387-residue chain is S-adenosylmethionine synthase (387 aa).

His15 provides a ligand contact to ATP. A Mg(2+)-binding site is contributed by Asp17. Residue Glu43 participates in K(+) binding. The L-methionine site is built by Glu56 and Gln99. Positions 99–109 (QSPDIAQGVNR) are flexible loop. ATP-binding positions include 166–168 (DAK), 232–233 (RF), Asp241, 247–248 (RK), Ala264, and Lys268. Residue Asp241 participates in L-methionine binding. Lys272 provides a ligand contact to L-methionine.

It belongs to the AdoMet synthase family. In terms of assembly, homotetramer; dimer of dimers. It depends on Mg(2+) as a cofactor. K(+) is required as a cofactor.

The protein localises to the cytoplasm. It catalyses the reaction L-methionine + ATP + H2O = S-adenosyl-L-methionine + phosphate + diphosphate. It participates in amino-acid biosynthesis; S-adenosyl-L-methionine biosynthesis; S-adenosyl-L-methionine from L-methionine: step 1/1. In terms of biological role, catalyzes the formation of S-adenosylmethionine (AdoMet) from methionine and ATP. The overall synthetic reaction is composed of two sequential steps, AdoMet formation and the subsequent tripolyphosphate hydrolysis which occurs prior to release of AdoMet from the enzyme. This chain is S-adenosylmethionine synthase, found in Nitrosomonas europaea (strain ATCC 19718 / CIP 103999 / KCTC 2705 / NBRC 14298).